A 642-amino-acid chain; its full sequence is Threonine--tRNA ligase (642 aa).

Positions 1 to 61 constitute a TGS domain; sequence MPVITITNGL…MQDSKLDIIT (61 aa). Positions 243-534 are catalytic; sequence DHRKIGQQLD…LIEEYAGFFP (292 aa). The Zn(2+) site is built by Cys-334, His-385, and His-511.

This sequence belongs to the class-II aminoacyl-tRNA synthetase family. As to quaternary structure, homodimer. Requires Zn(2+) as cofactor.

The protein resides in the cytoplasm. It catalyses the reaction tRNA(Thr) + L-threonine + ATP = L-threonyl-tRNA(Thr) + AMP + diphosphate + H(+). In terms of biological role, catalyzes the attachment of threonine to tRNA(Thr) in a two-step reaction: L-threonine is first activated by ATP to form Thr-AMP and then transferred to the acceptor end of tRNA(Thr). Also edits incorrectly charged L-seryl-tRNA(Thr). The protein is Threonine--tRNA ligase of Baumannia cicadellinicola subsp. Homalodisca coagulata.